The following is a 106-amino-acid chain: Nucleoid-associated protein BBta_7345 (106 aa).

Belongs to the YbaB/EbfC family. In terms of assembly, homodimer.

It is found in the cytoplasm. The protein resides in the nucleoid. In terms of biological role, binds to DNA and alters its conformation. May be involved in regulation of gene expression, nucleoid organization and DNA protection. The sequence is that of Nucleoid-associated protein BBta_7345 from Bradyrhizobium sp. (strain BTAi1 / ATCC BAA-1182).